A 127-amino-acid polypeptide reads, in one-letter code: Fumarate reductase subunit C (127 aa).

A run of 3 helical transmembrane segments spans residues 30-50, 67-87, and 107-127; these read ATILPLIFFTICLLVGLGSLV, IVVALNIVALAGSLFHAQTFF, and VVVLAQWAAVAAITLLVLVIV.

The protein belongs to the FrdC family. In terms of assembly, part of an enzyme complex containing four subunits: a flavoprotein (FrdA), an iron-sulfur protein (FrdB), and two hydrophobic anchor proteins (FrdC and FrdD).

It localises to the cell inner membrane. In terms of biological role, anchors the catalytic components of the fumarate reductase complex to the cell membrane, binds quinones. The chain is Fumarate reductase subunit C from Aliivibrio salmonicida (strain LFI1238) (Vibrio salmonicida (strain LFI1238)).